Here is a 203-residue protein sequence, read N- to C-terminus: MRLSASLFHIALVTVLLVLAGCSVTPSEDFSPINVTNAAQAKAWELQGKIAVKTSEDKFSTNLYWLHQTKANDLRLTTVLGTTVLTLKTNQGMATLDVDGKTYRDSNAQDLLTGISGWSIPLDSLPLWITGQIGSNDKIVSYNPDGTIKQLISHDPEANWVVSFLGWQQQSGAQVPRLLKIEREDVQIKIQTNQWIAVAAKTK.

The first 21 residues, 1-21, serve as a signal peptide directing secretion; sequence MRLSASLFHIALVTVLLVLAG. Cys22 carries N-palmitoyl cysteine lipidation. Cys22 carries S-diacylglycerol cysteine lipidation.

The protein belongs to the LolB family. As to quaternary structure, monomer.

It is found in the cell outer membrane. In terms of biological role, plays a critical role in the incorporation of lipoproteins in the outer membrane after they are released by the LolA protein. The polypeptide is Outer-membrane lipoprotein LolB (Shewanella frigidimarina (strain NCIMB 400)).